The sequence spans 699 residues: PTS system glucose-specific EIICBA component (699 aa).

Residues 3–424 form the PTS EIIC type-1 domain; sequence KALFGVLQKI…FNLKTPGRED (422 aa). Transmembrane regions (helical) follow at residues 16-36, 66-86, 89-109, 139-159, 180-200, 233-253, 283-303, 313-333, 338-358, 365-385, and 388-408; these read LMLP…GNAM, IVFD…LANG, VAGI…SAVL, IPTL…AALL, FVPI…LVIW, LIPF…FFSY, FMTG…LAIY, LVAG…ITEP, FLFV…LSFM, VKIG…GILP, and TAWW…YFGF. The region spanning 439 to 520 is the PTS EIIB type-1 domain; it reads GDLPYEILQA…QDIIAGRKPR (82 aa). Cys461 acts as the Phosphocysteine intermediate; for EIIB activity in catalysis. The PTS EIIA type-1 domain occupies 568–672; the sequence is DQVFSGKMMG…SLMTPIVFTN (105 aa). The active-site Tele-phosphohistidine intermediate; for EIIA activity is His620.

It is found in the cell membrane. It carries out the reaction N(pros)-phospho-L-histidyl-[protein] + D-glucose(out) = D-glucose 6-phosphate(in) + L-histidyl-[protein]. It catalyses the reaction D-glucosamine(out) + N(pros)-phospho-L-histidyl-[protein] = D-glucosamine 6-phosphate(in) + L-histidyl-[protein]. In terms of biological role, the phosphoenolpyruvate-dependent sugar phosphotransferase system (sugar PTS), a major carbohydrate active transport system, catalyzes the phosphorylation of incoming sugar substrates concomitantly with their translocation across the cell membrane. This system is involved in glucose transport. The system can also transport glucosamine. In addition, plays an important role in the phosphorylation of EIIA-deficient PTS transporters. The EIIA domain can transfer a phosphoryl group to EIIA-deficient PTS transporters, enabling growth with maltose, N-acetylglucosamine, sucrose or trehalose as the sole carbon source. The protein is PTS system glucose-specific EIICBA component (ptsG) of Bacillus subtilis (strain 168).